Consider the following 177-residue polypeptide: MTTIVSVRRNGKVVMGGDGQVSLGNTVMKGNAKKVRRLYHGQVLAGFAGATADAFTLFERFEQQLEKHQGHLVRAAVELAKDWRTDRSLSRLEAMLAVANKDASLIITGNGDVVEPEHGLIAMGSGGGFAQAAALALLQHNAELSAREVAETALNIAGSICVFTNQNLTIEELDSAV.

Thr2 is an active-site residue. Residues Gly158, Cys161, and Thr164 each contribute to the Na(+) site.

It belongs to the peptidase T1B family. HslV subfamily. In terms of assembly, a double ring-shaped homohexamer of HslV is capped on each side by a ring-shaped HslU homohexamer. The assembly of the HslU/HslV complex is dependent on binding of ATP.

The protein resides in the cytoplasm. It catalyses the reaction ATP-dependent cleavage of peptide bonds with broad specificity.. Its activity is regulated as follows. Allosterically activated by HslU binding. Protease subunit of a proteasome-like degradation complex believed to be a general protein degrading machinery. This is ATP-dependent protease subunit HslV from Pseudomonas aeruginosa (strain LESB58).